Here is a 347-residue protein sequence, read N- to C-terminus: Lipoyl synthase (347 aa).

The [4Fe-4S] cluster site is built by C77, C82, C88, C103, C107, C110, and S317. Residues 89-306 form the Radical SAM core domain; it reads FADGTATFMI…MDYGKKIGFF (218 aa).

It belongs to the radical SAM superfamily. Lipoyl synthase family. [4Fe-4S] cluster serves as cofactor.

The protein localises to the cytoplasm. It carries out the reaction [[Fe-S] cluster scaffold protein carrying a second [4Fe-4S](2+) cluster] + N(6)-octanoyl-L-lysyl-[protein] + 2 oxidized [2Fe-2S]-[ferredoxin] + 2 S-adenosyl-L-methionine + 4 H(+) = [[Fe-S] cluster scaffold protein] + N(6)-[(R)-dihydrolipoyl]-L-lysyl-[protein] + 4 Fe(3+) + 2 hydrogen sulfide + 2 5'-deoxyadenosine + 2 L-methionine + 2 reduced [2Fe-2S]-[ferredoxin]. Its pathway is protein modification; protein lipoylation via endogenous pathway; protein N(6)-(lipoyl)lysine from octanoyl-[acyl-carrier-protein]: step 2/2. In terms of biological role, catalyzes the radical-mediated insertion of two sulfur atoms into the C-6 and C-8 positions of the octanoyl moiety bound to the lipoyl domains of lipoate-dependent enzymes, thereby converting the octanoylated domains into lipoylated derivatives. The protein is Lipoyl synthase of Psychrobacter cryohalolentis (strain ATCC BAA-1226 / DSM 17306 / VKM B-2378 / K5).